Consider the following 321-residue polypeptide: o-succinylbenzoate synthase (321 aa).

K110 functions as the Proton donor in the catalytic mechanism. Positions 138, 165, and 188 each coordinate Mg(2+). The active-site Proton acceptor is the K212.

This sequence belongs to the mandelate racemase/muconate lactonizing enzyme family. MenC type 1 subfamily. The cofactor is a divalent metal cation.

It carries out the reaction (1R,6R)-6-hydroxy-2-succinyl-cyclohexa-2,4-diene-1-carboxylate = 2-succinylbenzoate + H2O. Its pathway is quinol/quinone metabolism; 1,4-dihydroxy-2-naphthoate biosynthesis; 1,4-dihydroxy-2-naphthoate from chorismate: step 4/7. It participates in quinol/quinone metabolism; menaquinone biosynthesis. In terms of biological role, converts 2-succinyl-6-hydroxy-2,4-cyclohexadiene-1-carboxylate (SHCHC) to 2-succinylbenzoate (OSB). The polypeptide is o-succinylbenzoate synthase (Mycolicibacterium smegmatis (strain ATCC 700084 / mc(2)155) (Mycobacterium smegmatis)).